The sequence spans 209 residues: Uracil phosphoribosyltransferase (209 aa).

Residues R79, R104, and 131–139 (DPMLATGNS) contribute to the 5-phospho-alpha-D-ribose 1-diphosphate site. Uracil is bound by residues I194 and 199–201 (GDA). 5-phospho-alpha-D-ribose 1-diphosphate is bound at residue D200.

This sequence belongs to the UPRTase family. It depends on Mg(2+) as a cofactor.

The enzyme catalyses UMP + diphosphate = 5-phospho-alpha-D-ribose 1-diphosphate + uracil. Its pathway is pyrimidine metabolism; UMP biosynthesis via salvage pathway; UMP from uracil: step 1/1. Allosterically activated by GTP. Functionally, catalyzes the conversion of uracil and 5-phospho-alpha-D-ribose 1-diphosphate (PRPP) to UMP and diphosphate. In Polaromonas naphthalenivorans (strain CJ2), this protein is Uracil phosphoribosyltransferase.